We begin with the raw amino-acid sequence, 140 residues long: Nucleoside diphosphate kinase (140 aa).

Positions 11, 59, 87, 93, 104, and 114 each coordinate ATP. The active-site Pros-phosphohistidine intermediate is His117.

The protein belongs to the NDK family. In terms of assembly, homotetramer. Mg(2+) serves as cofactor.

Its subcellular location is the cytoplasm. The catalysed reaction is a 2'-deoxyribonucleoside 5'-diphosphate + ATP = a 2'-deoxyribonucleoside 5'-triphosphate + ADP. It catalyses the reaction a ribonucleoside 5'-diphosphate + ATP = a ribonucleoside 5'-triphosphate + ADP. In terms of biological role, major role in the synthesis of nucleoside triphosphates other than ATP. The ATP gamma phosphate is transferred to the NDP beta phosphate via a ping-pong mechanism, using a phosphorylated active-site intermediate. In Rickettsia typhi (strain ATCC VR-144 / Wilmington), this protein is Nucleoside diphosphate kinase.